The chain runs to 712 residues: Lactoperoxidase (712 aa).

An N-terminal signal peptide occupies residues M1–S22. The propeptide occupies D23–R100. N-linked (GlcNAc...) (complex) asparagine; alternate glycosylation occurs at N106. N106 is a glycosylation site (N-linked (GlcNAc...) (hybrid) asparagine; alternate). 4 disulfides stabilise this stretch: C123–C284, C132–C145, C246–C256, and C250–C274. N212 carries an N-linked (GlcNAc...) (complex) asparagine; alternate glycan. N-linked (GlcNAc...) (high mannose) asparagine; alternate glycosylation is present at N212. Residue D225 participates in heme b binding. H226 serves as the catalytic Proton acceptor. A Ca(2+)-binding site is contributed by D227. Ca(2+) is bound by residues T301, F303, D305, and S307. Phosphoserine is present on S315. Residue N322 is glycosylated (N-linked (GlcNAc...) (high mannose) asparagine). Cysteines 354 and 365 form a disulfide. N358 carries N-linked (GlcNAc...) asparagine glycosylation. A heme b-binding site is contributed by E375. N449 carries an N-linked (GlcNAc...) (complex) asparagine; alternate glycan. N449 carries N-linked (GlcNAc...) (hybrid) asparagine; alternate glycosylation. N449 is a glycosylation site (N-linked (GlcNAc...) (high mannose) asparagine; alternate). Heme b is bound at residue H468. Residue Y482 is modified to 3'-nitrotyrosine. Disulfide bonds link C573/C630 and C671/C696.

The protein belongs to the peroxidase family. XPO subfamily. Ca(2+) is required as a cofactor. It depends on heme b as a cofactor. In terms of tissue distribution, mammary gland; milk.

The protein resides in the secreted. It is found in the cytoplasm. It catalyses the reaction 2 a phenolic donor + H2O2 = 2 a phenolic radical donor + 2 H2O. The enzyme catalyses thiocyanate + H2O2 + H(+) = hypothiocyanous acid + H2O. The catalysed reaction is iodide + H2O2 = hypoiodite + H2O. Its function is as follows. Heme-containing oxidoreductase which catalyzes the conversion of thiocyanate (SCN(-)) into antimicrobial agent hypothiocyanous acid (OSCN(-)) in the presence of hydrogen peroxide (H2O2). Also involved in the conversion of iodide (I(-)) into hypoiodite (IO(-)) in the presence of H2O2. Responsible for the inactivation of a wide range of micro-organisms and hence, important component of defense mechanism. Shows antibacterial properties against E.coli, K.pneumoniae, P.aeruginosa, S.sonnei, S.saphrophyticus, S.epidermidis and S.dysenteriae. May protect the udder from infection and may promote growth in newborns. May be implicated in airway host defense against infection. May contribute to maintaining an appropriate H2O2 cellular level, therefore protecting cells from H2O2-caused injuries and inflammation. This Bubalus bubalis (Domestic water buffalo) protein is Lactoperoxidase.